Reading from the N-terminus, the 398-residue chain is Ubiquitin-like modifier-activating enzyme 5 (398 aa).

ATP is bound by residues Gly-79, Asp-100, Lys-123, Asn-146, and Asn-180. Positions 222 and 225 each coordinate Zn(2+). Cys-246 serves as the catalytic Glycyl thioester intermediate. Residues Cys-299 and Cys-304 each coordinate Zn(2+). The short motif at 330–342 (VVHEDNEWGIELV) is the UFM1-interacting sequence (UIS) element. Residues 343-373 (SEVTEAELQDASGPIPDLPEGITVAYTIPEK) are linker. The UFC1-binding sequence (UFC) signature appears at 383 to 398 (ETEQSLEELMAQMKKI).

Belongs to the ubiquitin-activating E1 family. UBA5 subfamily. Homodimer; homodimerization is required for ufm1 activation. Interacts (via UIS motif) with ufm1; binds ufm1 via a trans-binding mechanism in which ufm1 interacts with distinct sites in both subunits of the uba5 homodimer. Interacts (via C-terminus) with ufc1.

It is found in the cytoplasm. The protein localises to the nucleus. It localises to the endoplasmic reticulum membrane. Its subcellular location is the golgi apparatus. Functionally, E1-like enzyme which specifically catalyzes the first step in ufmylation. Activates ufm1 by first adenylating its C-terminal glycine residue with ATP, and thereafter linking this residue to the side chain of a cysteine residue in E1, yielding a ufm1-E1 thioester and free AMP. Activates ufm1 via a trans-binding mechanism, in which ufm1 interacts with distinct sites in both subunits of the uba5 homodimer. Trans-binding also promotes stabilization of the uba5 homodimer, and enhances ATP-binding. Transfer of ufm1 from uba5 to the E2-like enzyme UFC1 also takes place using a trans mechanism. Ufmylation plays a key role in various processes, such as ribosome recycling, response to DNA damage, interferon response or reticulophagy (also called ER-phagy). This chain is Ubiquitin-like modifier-activating enzyme 5, found in Danio rerio (Zebrafish).